The following is a 340-amino-acid chain: Anthranilate phosphoribosyltransferase (340 aa).

5-phospho-alpha-D-ribose 1-diphosphate contacts are provided by residues Gly-81, 84-85 (GD), Thr-89, 91-94 (NIST), 109-117 (KHGNRGATS), and Ser-121. Gly-81 contacts anthranilate. A Mg(2+)-binding site is contributed by Ser-93. Asn-112 contacts anthranilate. Position 167 (Arg-167) interacts with anthranilate. Mg(2+) is bound by residues Asp-225 and Glu-226.

It belongs to the anthranilate phosphoribosyltransferase family. Homodimer. Mg(2+) is required as a cofactor.

The catalysed reaction is N-(5-phospho-beta-D-ribosyl)anthranilate + diphosphate = 5-phospho-alpha-D-ribose 1-diphosphate + anthranilate. The protein operates within amino-acid biosynthesis; L-tryptophan biosynthesis; L-tryptophan from chorismate: step 2/5. Its function is as follows. Catalyzes the transfer of the phosphoribosyl group of 5-phosphorylribose-1-pyrophosphate (PRPP) to anthranilate to yield N-(5'-phosphoribosyl)-anthranilate (PRA). The polypeptide is Anthranilate phosphoribosyltransferase (Methanocorpusculum labreanum (strain ATCC 43576 / DSM 4855 / Z)).